A 583-amino-acid polypeptide reads, in one-letter code: Phosphoglucomutase, cytoplasmic 2 (583 aa).

Positions 25 and 124 each coordinate alpha-D-glucose 1,6-bisphosphate. Residue serine 124 is the Phosphoserine intermediate of the active site. Mg(2+)-binding residues include serine 124, aspartate 300, aspartate 302, and aspartate 304. The residue at position 124 (serine 124) is a Phosphoserine. 6 residues coordinate alpha-D-glucose 1,6-bisphosphate: aspartate 304, arginine 305, threonine 368, glutamate 387, serine 389, and lysine 400.

This sequence belongs to the phosphohexose mutase family. In terms of assembly, monomer. Mg(2+) serves as cofactor.

Its subcellular location is the cytoplasm. It catalyses the reaction alpha-D-glucose 1-phosphate = alpha-D-glucose 6-phosphate. The enzyme catalyses O-phospho-L-seryl-[protein] + alpha-D-glucose 1-phosphate = alpha-D-glucose 1,6-bisphosphate + L-seryl-[protein]. The catalysed reaction is alpha-D-glucose 1,6-bisphosphate + L-seryl-[protein] = O-phospho-L-seryl-[protein] + alpha-D-glucose 6-phosphate. In terms of biological role, catalyzes the reversible isomerization of alpha-D-glucose 1-phosphate to alpha-D-glucose 6-phosphate. The mechanism proceeds via the intermediate compound alpha-D-glucose 1,6-bisphosphate. This enzyme participates in both the breakdown and synthesis of glucose. In Zea mays (Maize), this protein is Phosphoglucomutase, cytoplasmic 2.